Reading from the N-terminus, the 603-residue chain is UPF0313 protein MJ1155 (603 aa).

A Radical SAM core domain is found at 285 to 557; sequence GIVPVQFSVV…KIQKAICLYR (273 aa). Positions 299, 303, and 306 each coordinate [4Fe-4S] cluster.

The protein belongs to the UPF0313 family. It depends on [4Fe-4S] cluster as a cofactor.

The chain is UPF0313 protein MJ1155 from Methanocaldococcus jannaschii (strain ATCC 43067 / DSM 2661 / JAL-1 / JCM 10045 / NBRC 100440) (Methanococcus jannaschii).